The following is a 74-amino-acid chain: Auswaprin-a (74 aa).

Positions 1–24 (MSSGGLLLLLGLLTLWGVLTPVSS) are cleaved as a signal peptide. One can recognise a WAP domain in the interval 27–71 (RPKKPGLCPPRPQKPCVKECKNDWSCSGQQKCCNYGCIDECRDPI). Intrachain disulfides connect Cys-34-Cys-59, Cys-42-Cys-63, Cys-46-Cys-58, and Cys-52-Cys-67.

It belongs to the venom waprin family. As to expression, expressed by the venom gland.

The protein resides in the secreted. Its function is as follows. Damages membranes of susceptible bacteria. Has no hemolytic activity. Not toxic to mice. Does not inhibit the proteinases elastase and cathepsin G. The chain is Auswaprin-a from Pseudechis australis (Mulga snake).